The following is a 485-amino-acid chain: Probable carboxypeptidase S-like 1 (485 aa).

Positions 1–21 are cleaved as a signal peptide; that stretch reads MIFKFFFIFFLIILVIKISES. His111 serves as a coordination point for Zn(2+). Asp113 is an active-site residue. Zn(2+) is bound at residue Asp142. The Proton acceptor role is filled by Glu177. The Zn(2+) site is built by Glu178, Asp204, and His431.

The protein belongs to the peptidase M20A family. Zn(2+) is required as a cofactor.

It localises to the secreted. The chain is Probable carboxypeptidase S-like 1 from Dictyostelium discoideum (Social amoeba).